A 137-amino-acid chain; its full sequence is Putative pre-16S rRNA nuclease (137 aa).

It belongs to the YqgF nuclease family.

The protein localises to the cytoplasm. In terms of biological role, could be a nuclease involved in processing of the 5'-end of pre-16S rRNA. In Buchnera aphidicola subsp. Schizaphis graminum (strain Sg), this protein is Putative pre-16S rRNA nuclease.